The sequence spans 159 residues: Phosphopantetheine adenylyltransferase (159 aa).

Residue Thr10 coordinates substrate. ATP-binding positions include Thr10–Phe11 and His18. Residues Lys42, Met74, and Arg88 each coordinate substrate. Residues Gly89–Arg91, Glu99, and Trp124–Ser130 each bind ATP.

It belongs to the bacterial CoaD family. As to quaternary structure, homohexamer. Mg(2+) serves as cofactor.

The protein localises to the cytoplasm. The catalysed reaction is (R)-4'-phosphopantetheine + ATP + H(+) = 3'-dephospho-CoA + diphosphate. It functions in the pathway cofactor biosynthesis; coenzyme A biosynthesis; CoA from (R)-pantothenate: step 4/5. In terms of biological role, reversibly transfers an adenylyl group from ATP to 4'-phosphopantetheine, yielding dephospho-CoA (dPCoA) and pyrophosphate. This Klebsiella pneumoniae subsp. pneumoniae (strain ATCC 700721 / MGH 78578) protein is Phosphopantetheine adenylyltransferase.